The chain runs to 188 residues: MSVATGDKPVNSRQEILEGARRCFAEHGYEGATVRRLEEATGKSRGAIFHHFGDKEKLFLALAREDAARMAETVSENGLVEVMRGMLEDPERYDWLSIRLEISKQLRTDPEFRAKWTDHQSVLDEAVRVRLARNADKGRMRTDVPIEVLHLYLETVMDGFISRLATGASTEGLSEVLDLVETSVRRPD.

The HTH tetR-type domain maps to V10 to M70. Residues T33–F52 constitute a DNA-binding region (H-T-H motif). Residues L79 to V80, R130, and N134 contribute to the citrate site. Residue E181 participates in Mg(2+) binding. R185 is a binding site for citrate.

Homodimer.

Functionally, acnR negatively controls the expression of the aconitase gene acn. The protein is HTH-type transcriptional repressor AcnR of Corynebacterium efficiens (strain DSM 44549 / YS-314 / AJ 12310 / JCM 11189 / NBRC 100395).